We begin with the raw amino-acid sequence, 465 residues long: Dihydrolipoyllysine-residue acetyltransferase component 5 of pyruvate dehydrogenase complex, chloroplastic (465 aa).

A chloroplast-targeting transit peptide spans 1-31 (MSRLLQTPFLPSVSLPTKTRSSVTGFRVKPR). Residues 39-114 (IREIFMPALS…PVGSAIALLA (76 aa)) enclose the Lipoyl-binding domain. An N6-lipoyllysine modification is found at Lys-80. The disordered stretch occupies residues 123 to 148 (AKAKASGGGGGGDSKAPPASPPTAAV). Residues 136-148 (SKAPPASPPTAAV) show a composition bias toward low complexity. A Peripheral subunit-binding (PSBD) domain is found at 184–221 (VASPYAKKLAKELKVELAGLVGSGPMGRIVAKDVEAVA). Residue His-438 is part of the active site.

The protein belongs to the 2-oxoacid dehydrogenase family. Requires (R)-lipoate as cofactor.

Its subcellular location is the plastid. It localises to the chloroplast stroma. The enzyme catalyses N(6)-[(R)-dihydrolipoyl]-L-lysyl-[protein] + acetyl-CoA = N(6)-[(R)-S(8)-acetyldihydrolipoyl]-L-lysyl-[protein] + CoA. Functionally, the pyruvate dehydrogenase complex catalyzes the overall conversion of pyruvate to acetyl-CoA and CO(2). It contains multiple copies of three enzymatic components: pyruvate dehydrogenase (E1), dihydrolipoamide acetyltransferase (E2) and lipoamide dehydrogenase (E3). The protein is Dihydrolipoyllysine-residue acetyltransferase component 5 of pyruvate dehydrogenase complex, chloroplastic (EMB3003) of Arabidopsis thaliana (Mouse-ear cress).